Reading from the N-terminus, the 1015-residue chain is Collagen alpha-2(I) chain (1015 aa).

Residues 1-1015 (SGGFDFSFLP…FGYEGDFYRA (1015 aa)) form a disordered region. 2 positions are modified to 4-hydroxyproline: proline 10 and proline 13. The segment covering 20–30 (KGVGLGPGPMG) has biased composition (gly residues). Proline 38 is subject to 4-hydroxyproline. Residues 43–69 (QGPAGEPGEPGQTGPAGARGPAGPPGK) show a composition bias toward low complexity. Residues 70-84 (AGEDGHPGKPGRPGE) are compositionally biased toward basic and acidic residues. Position 106 is a 5-hydroxylysine; alternate (lysine 106). Residue lysine 106 is glycosylated (O-linked (Gal...) hydroxylysine; alternate). 3 stretches are compositionally biased toward low complexity: residues 140 to 169 (VGAPGPAGARGSDGSVGPVGPAGPIGSAGP), 194 to 208 (AGPRGEQGLPGVSGP), and 235 to 250 (PGPVGAVGATGARGLV). Gly residues predominate over residues 302–311 (GLRGGPGSRG). Over residues 324–340 (PAGSRGASGPAGVRGPS) the composition is skewed to low complexity. Proline 346 and proline 349 each carry 4-hydroxyproline. Gly residues predominate over residues 441-450 (GVQGGKGEQG). Residues 497 to 514 (PGESGAAGPVGPIGSRGP) show a composition bias toward low complexity. The span at 534-545 (GTAGPGSGGLPG) shows a compositional bias: gly residues. Low complexity-rich tracts occupy residues 568–612 (VGTT…PRGS) and 619–639 (VGPAGPNGFAGPAGAAGQPGA). The span at 640 to 649 (KGERGTKGPK) shows a compositional bias: basic and acidic residues. The span at 657–670 (PTGPVGAAGPSGPN) shows a compositional bias: low complexity. Positions 674–686 (GPAGGRGDGGPPG) are enriched in gly residues. The span at 687–697 (LTGFPGAAGRT) shows a compositional bias: low complexity. Over residues 734 to 743 (GETGAGGPPG) the composition is skewed to gly residues. Composition is skewed to low complexity over residues 751–778 (SGEPGTAGPPGTAGPQGLLGAPGILGLP), 786–799 (LPGVAGAVGEPGPL), 846–868 (YAGNAGPVGAAGAPGPHGTVGPA), and 877–897 (PGPAGSVGPVGAVGPRGPSGP). The segment covering 901-912 (RGDKGEAGDKGP) has biased composition (basic and acidic residues). A compositionally biased stretch (pro residues) spans 987–997 (PAGPPGPPGPP).

This sequence belongs to the fibrillar collagen family. In terms of assembly, trimers of one alpha 2(I) and two alpha 1(I) chains. Interacts (via C-terminus) with TMEM131 (via PapD-L domain); the interaction is direct and is involved in assembly and TRAPPIII ER-to-Golgi transport complex-dependent secretion of collagen. In terms of processing, prolines at the third position of the tripeptide repeating unit (G-X-Y) are hydroxylated in some or all of the chains. As to expression, expressed in bones.

Its subcellular location is the secreted. It is found in the extracellular space. The protein localises to the extracellular matrix. Type I collagen is a member of group I collagen (fibrillar forming collagen). This Doedicurus sp. (South American giant glyptodont) protein is Collagen alpha-2(I) chain.